The following is a 57-amino-acid chain: Large ribosomal subunit protein bL32 (57 aa).

It belongs to the bacterial ribosomal protein bL32 family.

The polypeptide is Large ribosomal subunit protein bL32 (Geobacillus sp. (strain WCH70)).